The sequence spans 320 residues: Mycothiol acetyltransferase (320 aa).

N-acetyltransferase domains are found at residues 8-141 (SHLT…RSLR) and 152-320 (LQIR…AALA). Glu-36 provides a ligand contact to 1D-myo-inositol 2-(L-cysteinylamino)-2-deoxy-alpha-D-glucopyranoside. Acetyl-CoA is bound by residues 80–82 (LVV) and 88–93 (RRGIAT). 1D-myo-inositol 2-(L-cysteinylamino)-2-deoxy-alpha-D-glucopyranoside contacts are provided by Glu-179, Lys-229, and Glu-239. Residues 243–245 (LGV) and 250–256 (QGRGLGR) each bind acetyl-CoA. Tyr-284 contributes to the 1D-myo-inositol 2-(L-cysteinylamino)-2-deoxy-alpha-D-glucopyranoside binding site. 289 to 294 (NIAAVR) is a binding site for acetyl-CoA.

The protein belongs to the acetyltransferase family. MshD subfamily. In terms of assembly, monomer.

The catalysed reaction is 1D-myo-inositol 2-(L-cysteinylamino)-2-deoxy-alpha-D-glucopyranoside + acetyl-CoA = mycothiol + CoA + H(+). Catalyzes the transfer of acetyl from acetyl-CoA to desacetylmycothiol (Cys-GlcN-Ins) to form mycothiol. This chain is Mycothiol acetyltransferase, found in Mycobacterium ulcerans (strain Agy99).